Consider the following 448-residue polypeptide: Neurexin-1b-beta (448 aa).

The signal sequence occupies residues 1-38 (MFGGWRLVVWQIFSEIITRRLGFWICLYFAALSVGMIS). Residues 39 to 375 (GSEPLVRTRH…EVFRESNGTT (337 aa)) lie on the Extracellular side of the membrane. The 199-residue stretch at 71-269 (STYVFGRQGG…DPNVRMEGSV (199 aa)) folds into the Laminin G-like domain. Residues 376 to 396 (GMVVGIVAGAALCILILLYAM) traverse the membrane as a helical segment. Topologically, residues 397-448 (YKYRNRDEGSYHVDESRNYICNSNGAALKEKNTADDDSGSKSKKNKNKEYYV) are cytoplasmic. Positions 426 to 436 (EKNTADDDSGS) are enriched in basic and acidic residues. A disordered region spans residues 426–448 (EKNTADDDSGSKSKKNKNKEYYV).

Belongs to the neurexin family.

The protein localises to the membrane. In terms of biological role, neuronal cell surface protein that may be involved in cell recognition and cell adhesion. May play a role in formation or maintenance of synaptic junctions. The protein is Neurexin-1b-beta (nrxn1b) of Danio rerio (Zebrafish).